The chain runs to 253 residues: Flap endonuclease Xni (253 aa).

Aspartate 105 contributes to the Mg(2+) binding site. In terms of domain architecture, 5'-3' exonuclease spans 162-251 (ERHQLLDYIA…HLKLSDLRVN (90 aa)). K(+)-binding residues include leucine 172, proline 181, isoleucine 183, and isoleucine 186. Residues 185–190 (GIGPKS) are interaction with DNA.

The protein belongs to the Xni family. Requires Mg(2+) as cofactor. K(+) serves as cofactor.

Has flap endonuclease activity. During DNA replication, flap endonucleases cleave the 5'-overhanging flap structure that is generated by displacement synthesis when DNA polymerase encounters the 5'-end of a downstream Okazaki fragment. The chain is Flap endonuclease Xni from Shewanella amazonensis (strain ATCC BAA-1098 / SB2B).